The chain runs to 91 residues: MTEQKNKTSLIEFPCTFPLKVMGAVHPEFEQAVLDTVRLHAPDTQAHHITTRPSSKGNYTGATVQVKVENQEQLDNIYRALTSHKLVKVVL.

It belongs to the UPF0250 family.

The chain is UPF0250 protein NMC1112 from Neisseria meningitidis serogroup C / serotype 2a (strain ATCC 700532 / DSM 15464 / FAM18).